The chain runs to 188 residues: Methylated-DNA--protein-cysteine methyltransferase (188 aa).

DNA contacts are provided by tyrosine 120, glycine 121, and arginine 134. Cysteine 151 (nucleophile; methyl group acceptor) is an active-site residue. A DNA-binding site is contributed by serine 157.

It belongs to the MGMT family.

The protein resides in the nucleus. It catalyses the reaction a 6-O-methyl-2'-deoxyguanosine in DNA + L-cysteinyl-[protein] = S-methyl-L-cysteinyl-[protein] + a 2'-deoxyguanosine in DNA. The catalysed reaction is a 4-O-methyl-thymidine in DNA + L-cysteinyl-[protein] = a thymidine in DNA + S-methyl-L-cysteinyl-[protein]. Functionally, involved in the cellular defense against the biological effects of O6-methylguanine (O6-MeG) and O4-methylthymine (O4-MeT) in DNA. Repairs the methylated nucleobase in DNA by stoichiometrically transferring the methyl group to a cysteine residue in the enzyme. This is a suicide reaction: the enzyme is irreversibly inactivated. Prefers double-stranded DNA over single-stranded DNA as substrate. In Saccharomyces cerevisiae (strain ATCC 204508 / S288c) (Baker's yeast), this protein is Methylated-DNA--protein-cysteine methyltransferase (MGT1).